The chain runs to 99 residues: Large ribosomal subunit protein bL21 (99 aa).

This sequence belongs to the bacterial ribosomal protein bL21 family. Part of the 50S ribosomal subunit. Contacts protein L20.

Its function is as follows. This protein binds to 23S rRNA in the presence of protein L20. The protein is Large ribosomal subunit protein bL21 of Mesomycoplasma hyopneumoniae (strain 7448) (Mycoplasma hyopneumoniae).